A 292-amino-acid polypeptide reads, in one-letter code: Ribosomal protein L11 methyltransferase (292 aa).

4 residues coordinate S-adenosyl-L-methionine: T144, G165, D187, and N229.

Belongs to the methyltransferase superfamily. PrmA family.

Its subcellular location is the cytoplasm. It carries out the reaction L-lysyl-[protein] + 3 S-adenosyl-L-methionine = N(6),N(6),N(6)-trimethyl-L-lysyl-[protein] + 3 S-adenosyl-L-homocysteine + 3 H(+). Functionally, methylates ribosomal protein L11. The protein is Ribosomal protein L11 methyltransferase of Ectopseudomonas mendocina (strain ymp) (Pseudomonas mendocina).